Reading from the N-terminus, the 377-residue chain is Nitric oxide reductase FlRd-NAD(+) reductase (377 aa).

This sequence belongs to the FAD-dependent oxidoreductase family. It depends on FAD as a cofactor.

It is found in the cytoplasm. The catalysed reaction is 2 reduced [nitric oxide reductase rubredoxin domain] + NAD(+) + H(+) = 2 oxidized [nitric oxide reductase rubredoxin domain] + NADH. The protein operates within nitrogen metabolism; nitric oxide reduction. Functionally, one of at least two accessory proteins for anaerobic nitric oxide (NO) reductase. Reduces the rubredoxin moiety of NO reductase. The chain is Nitric oxide reductase FlRd-NAD(+) reductase from Escherichia coli O6:K15:H31 (strain 536 / UPEC).